A 503-amino-acid chain; its full sequence is Probable cytosol aminopeptidase (503 aa).

Residues K270 and D275 each coordinate Mn(2+). The active site involves K282. 3 residues coordinate Mn(2+): D293, D352, and E354. R356 is an active-site residue.

The protein belongs to the peptidase M17 family. Mn(2+) serves as cofactor.

Its subcellular location is the cytoplasm. The catalysed reaction is Release of an N-terminal amino acid, Xaa-|-Yaa-, in which Xaa is preferably Leu, but may be other amino acids including Pro although not Arg or Lys, and Yaa may be Pro. Amino acid amides and methyl esters are also readily hydrolyzed, but rates on arylamides are exceedingly low.. It catalyses the reaction Release of an N-terminal amino acid, preferentially leucine, but not glutamic or aspartic acids.. Functionally, presumably involved in the processing and regular turnover of intracellular proteins. Catalyzes the removal of unsubstituted N-terminal amino acids from various peptides. In Erwinia tasmaniensis (strain DSM 17950 / CFBP 7177 / CIP 109463 / NCPPB 4357 / Et1/99), this protein is Probable cytosol aminopeptidase.